The primary structure comprises 485 residues: Ribosomal protein uS12 methylthiotransferase RimO (485 aa).

The region spanning 14 to 124 (PKVGFISLGC…VMAHVRELLP (111 aa)) is the MTTase N-terminal domain. [4Fe-4S] cluster-binding residues include Cys23, Cys59, Cys88, Cys167, Cys171, and Cys174. A Radical SAM core domain is found at 153-389 (LTPRHYAYVK…MEVAQRISRE (237 aa)). The TRAM domain maps to 392–468 (AEKVGRVLDV…EYDLYGEVIH (77 aa)).

The protein belongs to the methylthiotransferase family. RimO subfamily. It depends on [4Fe-4S] cluster as a cofactor.

Its subcellular location is the cytoplasm. The enzyme catalyses L-aspartate(89)-[ribosomal protein uS12]-hydrogen + (sulfur carrier)-SH + AH2 + 2 S-adenosyl-L-methionine = 3-methylsulfanyl-L-aspartate(89)-[ribosomal protein uS12]-hydrogen + (sulfur carrier)-H + 5'-deoxyadenosine + L-methionine + A + S-adenosyl-L-homocysteine + 2 H(+). In terms of biological role, catalyzes the methylthiolation of an aspartic acid residue of ribosomal protein uS12. The sequence is that of Ribosomal protein uS12 methylthiotransferase RimO from Deinococcus geothermalis (strain DSM 11300 / CIP 105573 / AG-3a).